Reading from the N-terminus, the 663-residue chain is Probable peptidyl-glycine alpha-amidating monooxygenase pamn-1 (663 aa).

Residues 1–21 (MNDRISINLIYLVLTFCCVSA) form the signal peptide. The peptidylglycine alpha-hydroxylating monooxygenase stretch occupies residues 1–300 (MNDRISINLI…YDAKLDNPYP (300 aa)). 2 residues coordinate Cu(2+): histidine 75 and histidine 76. A disulfide bridge links cysteine 82 with cysteine 98. Histidine 142 is a binding site for Cu(2+). The N-linked (GlcNAc...) asparagine glycan is linked to asparagine 191. 2 disulfides stabilise this stretch: cysteine 194-cysteine 305 and cysteine 261-cysteine 283. The Cu(2+) site is built by histidine 210 and histidine 212. Asparagine 269 carries an N-linked (GlcNAc...) asparagine glycan. Residue methionine 282 coordinates Cu(2+). The segment at 301–663 (QGAICAKDYP…WQFKIRHDQN (363 aa)) is peptidyl-alpha-hydroxyglycine alpha-amidating lyase. Residue arginine 376 participates in a protein binding. Asparagine 411 carries an N-linked (GlcNAc...) asparagine glycan. 4 NHL repeats span residues 411-454 (NQTK…WKIE), 464-507 (SGEL…LDLN), 511-554 (IRQF…MTTQ), and 626-656 (FGQP…LWQF). Cysteine 478 and cysteine 497 are oxidised to a cystine. A protein contacts are provided by tyrosine 496 and arginine 543.

The protein in the C-terminal section; belongs to the peptidyl-alpha-hydroxyglycine alpha-amidating lyase family. It in the N-terminal section; belongs to the copper type II ascorbate-dependent monooxygenase family. Monomer. Zn(2+) is required as a cofactor. Cu(2+) serves as cofactor.

It is found in the secreted. It carries out the reaction a [peptide]-C-terminal glycine + 2 L-ascorbate + O2 = a [peptide]-C-terminal (2S)-2-hydroxyglycine + 2 monodehydro-L-ascorbate radical + H2O. The catalysed reaction is a [peptide]-C-terminal (2S)-2-hydroxyglycine = a [peptide]-C-terminal amide + glyoxylate. Its function is as follows. Probable bifunctional enzyme that catalyzes 2 sequential steps in C-terminal alpha-amidation of peptides. The monooxygenase part produces an unstable peptidyl(2-hydroxyglycine) intermediate that is dismutated to glyoxylate and the corresponding desglycine peptide amide by the lyase part. C-terminal amidation of peptides such as neuropeptides is essential for full biological activity. The sequence is that of Probable peptidyl-glycine alpha-amidating monooxygenase pamn-1 from Caenorhabditis elegans.